The chain runs to 922 residues: Isoleucine--tRNA ligase (922 aa).

The 'HIGH' region motif lies at 57–67 (PYANGDIHLGH). Residue glutamate 553 coordinates L-isoleucyl-5'-AMP. Positions 594–598 (KMSKS) match the 'KMSKS' region motif. Lysine 597 serves as a coordination point for ATP. Zn(2+)-binding residues include cysteine 892, cysteine 895, cysteine 912, and cysteine 915.

The protein belongs to the class-I aminoacyl-tRNA synthetase family. IleS type 1 subfamily. In terms of assembly, monomer. Zn(2+) serves as cofactor.

The protein resides in the cytoplasm. It carries out the reaction tRNA(Ile) + L-isoleucine + ATP = L-isoleucyl-tRNA(Ile) + AMP + diphosphate. Its function is as follows. Catalyzes the attachment of isoleucine to tRNA(Ile). As IleRS can inadvertently accommodate and process structurally similar amino acids such as valine, to avoid such errors it has two additional distinct tRNA(Ile)-dependent editing activities. One activity is designated as 'pretransfer' editing and involves the hydrolysis of activated Val-AMP. The other activity is designated 'posttransfer' editing and involves deacylation of mischarged Val-tRNA(Ile). The chain is Isoleucine--tRNA ligase from Desulfitobacterium hafniense (strain Y51).